Reading from the N-terminus, the 389-residue chain is Major outer membrane porin (389 aa).

The N-terminal stretch at 1-22 is a signal peptide; the sequence is MKKLLKSALLFAATGSALSLQA.

The protein belongs to the chlamydial porin (CP) (TC 1.B.2) family. As to quaternary structure, part of a disulfide cross-linked outer membrane complex (COMC) composed of the major outer membrane porin (MOMP), the small cysteine-rich protein (OmcA) and the large cysteine-rich periplasmic protein (OmcB).

It localises to the cell outer membrane. Functionally, in elementary bodies (EBs, the infectious stage, which is able to survive outside the host cell) provides the structural integrity of the outer envelope through disulfide cross-links with the small cysteine-rich protein and the large cysteine-rich periplasmic protein. It has been described in publications as the Sarkosyl-insoluble COMC (Chlamydia outer membrane complex), and serves as the functional equivalent of peptidoglycan. In terms of biological role, permits diffusion of specific solutes through the outer membrane. The polypeptide is Major outer membrane porin (ompA) (Chlamydia abortus (strain DSM 27085 / S26/3) (Chlamydophila abortus)).